Consider the following 692-residue polypeptide: Proprotein convertase subtilisin/kexin type 9 (692 aa).

The first 30 residues, Met1 to Ala30, serve as a signal peptide directing secretion. Residues Gln31 to Gln152 constitute a propeptide that is removed on maturation. The residue at position 38 (Tyr38) is a Sulfotyrosine. The residue at position 47 (Ser47) is a Phosphoserine. In terms of domain architecture, Inhibitor I9 spans Thr77–Val149. Residues Pro155–Leu444 form the Peptidase S8 domain. Active-site charge relay system residues include Asp186 and His226. 2 disulfides stabilise this stretch: Cys223–Cys255 and Cys323–Cys358. Ser386 (charge relay system) is an active-site residue. The C-terminal domain stretch occupies residues Arg450–Gln692. Disulfide bonds link Cys457/Cys527, Cys477/Cys526, and Cys486/Cys509. A glycan (N-linked (GlcNAc...) asparagine) is linked at Asn533. 6 disulfide bridges follow: Cys534–Cys601, Cys552–Cys600, Cys562–Cys588, Cys608–Cys679, Cys626–Cys678, and Cys635–Cys654. The residue at position 688 (Ser688) is a Phosphoserine.

Belongs to the peptidase S8 family. In terms of assembly, monomer. Can self-associate to form dimers and higher multimers which may have increased LDLR degrading activity. The precursor protein but not the mature protein may form multimers. Interacts with APOB, VLDLR, LRP8/APOER2 and BACE1. The full-length immature form (pro-PCSK9) interacts with SCNN1A, SCNN1B and SCNN1G. The pro-PCSK9 form (via C-terminal domain) interacts with LDLR. Interacts (via the C-terminal domain) with ANXA2 (via repeat Annexin 1); the interaction inhibits the degradation of LDLR. The cofactor is Ca(2+). In terms of processing, cleavage by furin and PCSK5 generates a truncated inactive protein that is unable to induce LDLR degradation. Undergoes autocatalytic cleavage in the endoplasmic reticulum to release the propeptide from the N-terminus and the cleavage of the propeptide is strictly required for its maturation and activation. The cleaved propeptide however remains associated with the catalytic domain through non-covalent interactions, preventing potential substrates from accessing its active site. As a result, it is secreted from cells as a propeptide-containing, enzymatically inactive protein. Post-translationally, phosphorylation protects the propeptide against proteolysis.

The protein localises to the cytoplasm. It is found in the secreted. The protein resides in the endosome. It localises to the lysosome. Its subcellular location is the cell surface. The protein localises to the endoplasmic reticulum. It is found in the golgi apparatus. Its activity is regulated as follows. Its proteolytic activity is autoinhibited by the non-covalent binding of the propeptide to the catalytic domain. Inhibited by EGTA. Crucial player in the regulation of plasma cholesterol homeostasis. Binds to low-density lipid receptor family members: low density lipoprotein receptor (LDLR), very low density lipoprotein receptor (VLDLR), apolipoprotein E receptor (LRP1/APOER) and apolipoprotein receptor 2 (LRP8/APOER2), and promotes their degradation in intracellular acidic compartments. Acts via a non-proteolytic mechanism to enhance the degradation of the hepatic LDLR through a clathrin LDLRAP1/ARH-mediated pathway. May prevent the recycling of LDLR from endosomes to the cell surface or direct it to lysosomes for degradation. Can induce ubiquitination of LDLR leading to its subsequent degradation. Inhibits intracellular degradation of APOB via the autophagosome/lysosome pathway in a LDLR-independent manner. Involved in the disposal of non-acetylated intermediates of BACE1 in the early secretory pathway. Inhibits epithelial Na(+) channel (ENaC)-mediated Na(+) absorption by reducing ENaC surface expression primarily by increasing its proteasomal degradation. Regulates neuronal apoptosis via modulation of LRP8/APOER2 levels and related anti-apoptotic signaling pathways. The sequence is that of Proprotein convertase subtilisin/kexin type 9 (PCSK9) from Macaca mulatta (Rhesus macaque).